The primary structure comprises 130 residues: Small ribosomal subunit protein uS8A (130 aa).

This sequence belongs to the universal ribosomal protein uS8 family. In terms of assembly, component of the small ribosomal subunit (SSU). Mature ribosomes consist of a small (40S) and a large (60S) subunit. The 40S subunit contains about 32 different proteins and 1 molecule of RNA (18S). The 60S subunit contains 45 different proteins and 3 molecules of RNA (25S, 5.8S and 5S).

It localises to the cytoplasm. Its function is as follows. Component of the ribosome, a large ribonucleoprotein complex responsible for the synthesis of proteins in the cell. The small ribosomal subunit (SSU) binds messenger RNAs (mRNAs) and translates the encoded message by selecting cognate aminoacyl-transfer RNA (tRNA) molecules. The large subunit (LSU) contains the ribosomal catalytic site termed the peptidyl transferase center (PTC), which catalyzes the formation of peptide bonds, thereby polymerizing the amino acids delivered by tRNAs into a polypeptide chain. The nascent polypeptides leave the ribosome through a tunnel in the LSU and interact with protein factors that function in enzymatic processing, targeting, and the membrane insertion of nascent chains at the exit of the ribosomal tunnel. This is Small ribosomal subunit protein uS8A (RPS22A) from Candida albicans (strain SC5314 / ATCC MYA-2876) (Yeast).